Reading from the N-terminus, the 706-residue chain is Choline transporter-like protein 2 (706 aa).

Residues 1–33 (MGDERPHYYGKHGTPQKYDPTFKGPIYNRGCTD) are Cytoplasmic-facing. Position 14 is a phosphothreonine (Thr-14). Residues 34-54 (IICCVFLLLAIVGYVAVGIIA) form a helical membrane-spanning segment. Topologically, residues 55–232 (WTHGDPRKVI…RIFEDYTVSW (178 aa)) are extracellular. N-linked (GlcNAc...) asparagine glycosylation is found at Asn-187 and Asn-200. Residues 233–253 (YWIIIGLVIAMAMSLLFIILL) form a helical membrane-spanning segment. Topologically, residues 254-256 (RFL) are cytoplasmic. Residues 257–277 (AGIMVWVMIIMVILVLGYGIF) traverse the membrane as a helical segment. Residues 278–315 (HCYMEYSRLRGEAGSDVSLVDLGFQTDFRVYLHLRQTW) lie on the Extracellular side of the membrane. The helical transmembrane segment at 316 to 336 (LAFMIILSILEVIIILLLIFL) threads the bilayer. Residues 337–364 (RKRILIAIALIKEASRAVGYVMCSLLYP) are Cytoplasmic-facing. A helical membrane pass occupies residues 365 to 385 (LVTFFLLCLCIAYWASTAVFL). Topologically, residues 386-457 (STSNEAVYKI…FNAFMFFWLA (72 aa)) are extracellular. Asn-417 is a glycosylation site (N-linked (GlcNAc...) asparagine). The chain crosses the membrane as a helical span at residues 458–480 (NFVLALGQVTLAGAFASYYWALR). The Cytoplasmic segment spans residues 481–504 (KPDDLPAFPLFSAFGRALRYHTGS). The helical transmembrane segment at 505–525 (LAFGALILAIVQIIRVILEYL) threads the bilayer. Residues 526 to 563 (DQRLKAAENKFAKCLMTCLKCCFWCLEKFIKFLNRNAY) are Extracellular-facing. A helical transmembrane segment spans residues 564-584 (IMIAIYGTNFCTSARNAFFLL). The Cytoplasmic segment spans residues 585–599 (MRNIIRVAVLDKVTD). A helical transmembrane segment spans residues 600 to 620 (FLFLLGKLLIVGSVGILAFFF). Residues 621–638 (FTHRIRIVQDTAPPLNYY) are Extracellular-facing. The helical transmembrane segment at 639–659 (WVPILTVIVGSYLIAHGFFSV) threads the bilayer. At 660–706 (YGMCVDTLFLCFLEDLERNDGSAERPYFMSSTLKKLLNKTNKKAAES) the chain is on the cytoplasmic side.

This sequence belongs to the CTL (choline transporter-like) family. In terms of assembly, interacts with COCH. As to expression, present in supporting cells of the inner ear (at protein level). Expressed in inner ear vestibular tissue.

It is found in the cell membrane. Its subcellular location is the mitochondrion outer membrane. The catalysed reaction is choline(out) + n H(+)(in) = choline(in) + n H(+)(out). It catalyses the reaction ethanolamine(out) + n H(+)(in) = ethanolamine(in) + n H(+)(out). Choline/H+ antiporter, mainly in mitochodria. Also acts as a low-affinity ethanolamine/H+ antiporter, regulating the supply of extracellular ethanolamine (Etn) for the CDP-Etn pathway, redistribute intracellular Etn and balance the CDP-Cho and CDP-Etn arms of the Kennedy pathway. Its function is as follows. Does not exhibit choline transporter activity. This is Choline transporter-like protein 2 from Homo sapiens (Human).